The following is a 490-amino-acid chain: UDP-N-acetylmuramate--L-alanine ligase (490 aa).

133-139 serves as a coordination point for ATP; that stretch reads GTHGKTS.

Belongs to the MurCDEF family.

The protein resides in the cytoplasm. The enzyme catalyses UDP-N-acetyl-alpha-D-muramate + L-alanine + ATP = UDP-N-acetyl-alpha-D-muramoyl-L-alanine + ADP + phosphate + H(+). Its pathway is cell wall biogenesis; peptidoglycan biosynthesis. Cell wall formation. The sequence is that of UDP-N-acetylmuramate--L-alanine ligase from Saccharopolyspora erythraea (strain ATCC 11635 / DSM 40517 / JCM 4748 / NBRC 13426 / NCIMB 8594 / NRRL 2338).